The sequence spans 554 residues: Putative F-box/LRR-repeat protein 8 (554 aa).

An F-box domain is found at 71–117; the sequence is YDYISNLPDECLSLIFQSLTCADLKRCSLVCRRWLTIEGQCRHRLSL. LRR repeat units lie at residues 119-144, 148-173, 174-199, 205-224, 250-275, 301-325, 326-351, 354-379, 383-404, 405-428, 430-455, and 456-480; these read AQSDLISVIPSLFTRFDSVTKLVLRS, SLGICDNAFVMISVRCRNLTRLKLRG, CPEISDLGIIGFTENCRSLKKVSFGS, KGMNALLNTCLGLEELSVKR, KELHNGQCFAPLLSGAKGLRILKIFR, RIQMSDLGLTALSKCSGVEVLHLVK, TPDCTNVGLALVAERCKLLRKLHIDG, TNRIGDEGLIVVAKYCWNLQELVLIG, TKLSLEAIVSNCLNLERLALCG, SDTVGDTELCCIAEKCLALRKLCI, NCPITDDGIKALGNGCPNLLKVKVKK, and CRGVTTQGADLLRKRRALLVVNLDA.

This is Putative F-box/LRR-repeat protein 8 (FBL8) from Arabidopsis thaliana (Mouse-ear cress).